We begin with the raw amino-acid sequence, 957 residues long: PE-PGRS family protein PE_PGRS3 (957 aa).

The PE domain occupies Val4 to Ala94. Residues Cys893–Ala925 are compositionally biased toward basic residues. A disordered region spans residues Cys893–Pro957.

It belongs to the mycobacterial PE family. PGRS subfamily. In terms of processing, a cleavage of the protein removes the N-terminal 120-150 residues, immediately upstream the PGRS domain. The exact position of the cleavage site could not be identified.

It localises to the cell outer membrane. The protein resides in the secreted. The protein localises to the cell wall. Its subcellular location is the cell surface. Its function is as follows. The arginine-rich C-terminal region protrudes from the mycobacterial membrane and mediates M.tuberculosis entry into host epithelial cells. May serve as a bridge between mycobacteria and host cells by interacting with specific host phospholipids and extracting them from host cells, for their direct integration or as a source of phosphate, during phases of TB pathogenesis when M.tuberculosis is short of phosphate supply. This is PE-PGRS family protein PE_PGRS3 from Mycobacterium tuberculosis (strain ATCC 25618 / H37Rv).